Consider the following 292-residue polypeptide: 4-hydroxy-tetrahydrodipicolinate synthase (292 aa).

Threonine 44 lines the pyruvate pocket. The Proton donor/acceptor role is filled by tyrosine 132. Catalysis depends on lysine 161, which acts as the Schiff-base intermediate with substrate. Isoleucine 203 is a binding site for pyruvate.

Belongs to the DapA family. In terms of assembly, homotetramer; dimer of dimers.

Its subcellular location is the cytoplasm. The enzyme catalyses L-aspartate 4-semialdehyde + pyruvate = (2S,4S)-4-hydroxy-2,3,4,5-tetrahydrodipicolinate + H2O + H(+). Its pathway is amino-acid biosynthesis; L-lysine biosynthesis via DAP pathway; (S)-tetrahydrodipicolinate from L-aspartate: step 3/4. Functionally, catalyzes the condensation of (S)-aspartate-beta-semialdehyde [(S)-ASA] and pyruvate to 4-hydroxy-tetrahydrodipicolinate (HTPA). The chain is 4-hydroxy-tetrahydrodipicolinate synthase from Fervidobacterium nodosum (strain ATCC 35602 / DSM 5306 / Rt17-B1).